The primary structure comprises 336 residues: Dihydroorotate dehydrogenase (quinone) (336 aa).

FMN contacts are provided by residues Ala-62–Lys-66 and Thr-86. Lys-66 serves as a coordination point for substrate. Asn-111–Phe-115 serves as a coordination point for substrate. Residues Asn-139 and Asn-172 each contribute to the FMN site. Asn-172 serves as a coordination point for substrate. The active-site Nucleophile is Ser-175. Asn-177 contacts substrate. Residues Lys-217 and Thr-245 each contribute to the FMN site. Asn-246–Thr-247 provides a ligand contact to substrate. FMN-binding positions include Gly-268, Gly-297, and Tyr-318 to Thr-319.

The protein belongs to the dihydroorotate dehydrogenase family. Type 2 subfamily. In terms of assembly, monomer. Requires FMN as cofactor.

Its subcellular location is the cell membrane. It carries out the reaction (S)-dihydroorotate + a quinone = orotate + a quinol. It participates in pyrimidine metabolism; UMP biosynthesis via de novo pathway; orotate from (S)-dihydroorotate (quinone route): step 1/1. Functionally, catalyzes the conversion of dihydroorotate to orotate with quinone as electron acceptor. This Vibrio parahaemolyticus serotype O3:K6 (strain RIMD 2210633) protein is Dihydroorotate dehydrogenase (quinone).